We begin with the raw amino-acid sequence, 355 residues long: Methionine import ATP-binding protein MetN (355 aa).

The ABC transporter domain maps to 8–250 (LKNIDITFTQ…PQEDLTQEFI (243 aa)). 42 to 49 (GYSGAGKS) lines the ATP pocket.

Belongs to the ABC transporter superfamily. Methionine importer (TC 3.A.1.24) family. As to quaternary structure, the complex is composed of two ATP-binding proteins (MetN), two transmembrane proteins (MetI) and a solute-binding protein (MetQ).

The protein resides in the cell membrane. The catalysed reaction is L-methionine(out) + ATP + H2O = L-methionine(in) + ADP + phosphate + H(+). The enzyme catalyses D-methionine(out) + ATP + H2O = D-methionine(in) + ADP + phosphate + H(+). Part of the ABC transporter complex MetNIQ involved in methionine import. Responsible for energy coupling to the transport system. The chain is Methionine import ATP-binding protein MetN from Streptococcus thermophilus (strain CNRZ 1066).